Here is a 75-residue protein sequence, read N- to C-terminus: Theromacin (75 aa).

Intrachain disulfides connect Cys2–Cys9, Cys24–Cys28, Cys31–Cys73, Cys39–Cys47, and Cys57–Cys59.

Belongs to the macin family.

The protein resides in the secreted. Functionally, has a bactericial activity. This Hirudo medicinalis (Medicinal leech) protein is Theromacin.